The following is a 148-amino-acid chain: UPF0756 membrane protein NGK_2061 (148 aa).

A run of 4 helical transmembrane segments spans residues 10-32 (LVTL…ATIL), 50-70 (HGLN…LVSG), 85-105 (MISA…GVPL), and 116-136 (LLIG…GPLI).

The protein belongs to the UPF0756 family.

The protein resides in the cell membrane. This chain is UPF0756 membrane protein NGK_2061, found in Neisseria gonorrhoeae (strain NCCP11945).